The chain runs to 416 residues: MKEIEYVQDLCSRAKKASKVLKQLSSSKKNKILLSLADLLEKRKAEILLANELDLKDGKEKKLSSALMDRLLLNEKRIFSMASAVREIAALPDPIGEVTRGITLPNGLELVTRRVPLGVVMVIYESRPNVTIDVGALSFKSGNACILRGGSEAFYSNEILIKLFHEILIKEEIDIGSVVFVDKTDRSFMIPFFQQTSLIDIVVPRGGEGLIRFVSENSKIPVVKHDKGVCNLYIDQDADPEKVIPIVINSKVQRPGVCNSTENLILHNGYPFRKELLEALAKEGVELLLDPSSLALYPKGKPVKQQDYLEEFLDLRLSVKTVSSLEEALAFIEKTSSGHTEAIVTEDLNTARIFTNSLDSAALFINCSTRFHDGGEFGLGAEVGISTGKLHVRGPMGLVHLTTTTTYVTGNGQIRG.

This sequence belongs to the gamma-glutamyl phosphate reductase family.

The protein resides in the cytoplasm. The catalysed reaction is L-glutamate 5-semialdehyde + phosphate + NADP(+) = L-glutamyl 5-phosphate + NADPH + H(+). Its pathway is amino-acid biosynthesis; L-proline biosynthesis; L-glutamate 5-semialdehyde from L-glutamate: step 2/2. Its function is as follows. Catalyzes the NADPH-dependent reduction of L-glutamate 5-phosphate into L-glutamate 5-semialdehyde and phosphate. The product spontaneously undergoes cyclization to form 1-pyrroline-5-carboxylate. The protein is Gamma-glutamyl phosphate reductase of Leptospira interrogans serogroup Icterohaemorrhagiae serovar copenhageni (strain Fiocruz L1-130).